The sequence spans 593 residues: Copine-5 (593 aa).

A C2 1 domain is found at 2-134 (EQPEDMASLS…SPGSRLEKPL (133 aa)). Ser-19 is subject to Phosphoserine. Ca(2+)-binding residues include Asp-38, Asp-44, Asp-98, Asp-100, Ser-103, Lys-108, and Asp-110. Phosphoserine is present on Ser-103. The residue at position 140 (Ser-140) is a Phosphoserine. The region spanning 161–284 (KCGTIILSAE…ARGQSQFNIY (124 aa)) is the C2 2 domain. Ca(2+)-binding residues include Asp-192, Asp-198, Asp-254, Asp-256, and Asp-262. Positions 328–554 (NFTVAIDFTA…DVLAEIPDQL (227 aa)) constitute a VWFA domain. The disordered stretch occupies residues 562 to 593 (GIRPRPPPAAPTHSPSQSPARTPPASPLHTHI). The span at 572 to 581 (PTHSPSQSPA) shows a compositional bias: low complexity.

It belongs to the copine family. The cofactor is Ca(2+). In terms of tissue distribution, expressed in the brain, heart, stomach, spleen, lymph node and testis. Expressed in melanocytes.

Its subcellular location is the perikaryon. It localises to the cell projection. In terms of biological role, probable calcium-dependent phospholipid-binding protein that may play a role in calcium-mediated intracellular processes. Plays a role in dendrite formation by melanocytes. The chain is Copine-5 from Homo sapiens (Human).